We begin with the raw amino-acid sequence, 402 residues long: Probable 2,3-bisphosphoglycerate-independent phosphoglycerate mutase (402 aa).

This sequence belongs to the BPG-independent phosphoglycerate mutase family. A-PGAM subfamily.

The catalysed reaction is (2R)-2-phosphoglycerate = (2R)-3-phosphoglycerate. It participates in carbohydrate degradation; glycolysis; pyruvate from D-glyceraldehyde 3-phosphate: step 3/5. Its function is as follows. Catalyzes the interconversion of 2-phosphoglycerate and 3-phosphoglycerate. This Thermosipho melanesiensis (strain DSM 12029 / CIP 104789 / BI429) protein is Probable 2,3-bisphosphoglycerate-independent phosphoglycerate mutase.